A 294-amino-acid polypeptide reads, in one-letter code: Sperm acrosome membrane-associated protein 1 (294 aa).

A signal peptide spans 1–29 (MSPRGTGCSAGLLMTVGWLLLAGLQSARG). Residues 30 to 221 (TNVTAAVQDA…LPATDAALIF (192 aa)) are Extracellular-facing. Asparagine 31 carries N-linked (GlcNAc...) asparagine glycosylation. Positions 42–70 (AHEGEGEEETENNDSETAENYAPPETEDV) are disordered. Residues 46 to 58 (EGEEETENNDSET) are compositionally biased toward acidic residues. Residues 222 to 242 (VLTIGVIICVFIIFLLIFIII) form a helical membrane-spanning segment. Residues 243 to 294 (NWAAVKAFWGAKASTPEVQSEQSSVRYKDSTSLDQLPTEMPGEDDALSEWNE) lie on the Cytoplasmic side of the membrane. Serine 256 bears the Phosphoserine mark. Polar residues predominate over residues 258–267 (PEVQSEQSSV). Residues 258 to 294 (PEVQSEQSSVRYKDSTSLDQLPTEMPGEDDALSEWNE) form a disordered region. Phosphotyrosine is present on tyrosine 269. Positions 283 to 294 (PGEDDALSEWNE) are enriched in acidic residues. Phosphoserine is present on serine 290.

Interacts with CYLC1; the interaction may be relevant for proper acrosome attachment to the nuclear envelope. N-glycosylated. In terms of tissue distribution, testis specific.

It is found in the cytoplasmic vesicle. The protein resides in the secretory vesicle. It localises to the acrosome inner membrane. Functionally, plays a role in acrosome formation and establishment of normal sperm morphology during spermatogenesis. Important for male fertility. The chain is Sperm acrosome membrane-associated protein 1 (SPACA1) from Homo sapiens (Human).